Consider the following 494-residue polypeptide: MNYMTITAHKLKDMIKNREISVEEIARTYLDRVDEVDGKLGAYLYVASEGLLQKAKELDKKISRGEILGKLFGIPISVKDNISVENMQNTCASRMLTGYISPYDAHVVEKIKFHQGIIIGKTNMDEFAMGSSTENSSIKLSRNPWDLNRVPGGSSGGSAISVAAGEAALSIGTDTGGSIRQPASFCGVVGLKPTYGRISRYGAVAFGSTLDQIGTIAADVEDCALLTECISGMDKRDFTTADMEVPKYSKSLSKDIKGMRIGIPKEYFGEGLNDKVRKSVEEAILVLKENGAQIKECSIPLSEYALAAYYIIASAEASSNLARFDGIRYGYRSKNFKDAVDIYFKSRSEGLGSEVKRRIVLGTYVLSEGYYDDYYKKALKVRKLIRNQFEDIMKEFHAIISPTCPTTAFKIDEKKEDVMAMYLSDIYTVPANITGIPAISIPCGMVDGLPVGLQIMSGYFRENILFNVAYSFEQSTKWHSITPDIQKEDRNYGI.

Residues lysine 79 and serine 154 each act as charge relay system in the active site. Serine 178 serves as the catalytic Acyl-ester intermediate.

It belongs to the amidase family. GatA subfamily. In terms of assembly, heterotrimer of A, B and C subunits.

It catalyses the reaction L-glutamyl-tRNA(Gln) + L-glutamine + ATP + H2O = L-glutaminyl-tRNA(Gln) + L-glutamate + ADP + phosphate + H(+). Its function is as follows. Allows the formation of correctly charged Gln-tRNA(Gln) through the transamidation of misacylated Glu-tRNA(Gln) in organisms which lack glutaminyl-tRNA synthetase. The reaction takes place in the presence of glutamine and ATP through an activated gamma-phospho-Glu-tRNA(Gln). The protein is Glutamyl-tRNA(Gln) amidotransferase subunit A of Clostridium kluyveri (strain NBRC 12016).